The primary structure comprises 175 residues: DELTA-stichotoxin-She4b (175 aa).

The tract at residues 1-10 is plays an important role in the hemolytic activity; that stretch reads ALAGTIIAGA. The interval 9–28 is N-terminal region; sequence GASLTFQVLDKVLEELGKVS. Phosphocholine contacts are provided by Ser-52, Val-85, Ser-103, Pro-105, Tyr-131, Tyr-135, and Tyr-136. The tract at residues 103–118 is trp-rich region, which is important for the binding to lipid membrane; it reads SVPFDYNWYSNWWDVK. Residues 141–143 carry the Cell attachment site, crucial for protein stability motif; that stretch reads RGD.

In terms of assembly, octamer or nonamer in membranes. Monomer in the soluble state. Originally described as forming tetramer in the presence of a lipidic interface. Expressed in tentacles and mesenteric filaments.

The protein localises to the secreted. It is found in the nematocyst. The protein resides in the target cell membrane. In terms of biological role, pore-forming protein that forms cations-selective hydrophilic pores of around 1 nm and causes cardiac stimulation and cytolysis. Pore formation is a multi-step process that involves specific recognition of membrane sphingomyelin (but neither cholesterol nor phosphatidylcholine) using aromatic rich region and adjacent phosphocholine (POC) binding site, firm binding to the membrane (mainly driven by hydrophobic interactions) accompanied by the transfer of the N-terminal region to the lipid-water interface and finally pore formation after oligomerization of monomers. Cytolytic effects include red blood cells hemolysis, platelet aggregation and lysis, cytotoxic and cytostatic effects on fibroblasts. Lethality in mammals has been ascribed to severe vasospasm of coronary vessels, cardiac arrhythmia, and inotropic effects. The chain is DELTA-stichotoxin-She4b from Stichodactyla helianthus (Sun anemone).